The following is an 86-amino-acid chain: Small ribosomal subunit protein uS15 (86 aa).

The interval 1–22 is disordered; the sequence is MSIDTQKVIEDNKRSSADTGSP. Residues 7–16 are compositionally biased toward basic and acidic residues; the sequence is KVIEDNKRSS.

It belongs to the universal ribosomal protein uS15 family. Part of the 30S ribosomal subunit. Forms a bridge to the 50S subunit in the 70S ribosome, contacting the 23S rRNA.

In terms of biological role, one of the primary rRNA binding proteins, it binds directly to 16S rRNA where it helps nucleate assembly of the platform of the 30S subunit by binding and bridging several RNA helices of the 16S rRNA. Functionally, forms an intersubunit bridge (bridge B4) with the 23S rRNA of the 50S subunit in the ribosome. The sequence is that of Small ribosomal subunit protein uS15 from Stenotrophomonas maltophilia (strain R551-3).